The following is a 313-amino-acid chain: D-alanine--D-alanine ligase (313 aa).

The region spanning 108-308 (KLVWQQTGVP…YSELVVKVLS (201 aa)) is the ATP-grasp domain. 138 to 193 (VAKLGLPLFVKPASEGSSVAVLKVKTADALPAALAEAATHDKIVIVEKSIEGGGEY) provides a ligand contact to ATP. Residues Asp262, Glu275, and Asn277 each contribute to the Mg(2+) site.

This sequence belongs to the D-alanine--D-alanine ligase family. It depends on Mg(2+) as a cofactor. The cofactor is Mn(2+).

Its subcellular location is the cytoplasm. It carries out the reaction 2 D-alanine + ATP = D-alanyl-D-alanine + ADP + phosphate + H(+). The protein operates within cell wall biogenesis; peptidoglycan biosynthesis. Cell wall formation. In Burkholderia cenocepacia (strain HI2424), this protein is D-alanine--D-alanine ligase.